The following is a 428-amino-acid chain: Serine--tRNA ligase (428 aa).

Residue 235–237 (TAE) coordinates L-serine. 266 to 268 (RSE) contributes to the ATP binding site. Glu-289 contributes to the L-serine binding site. 353–356 (EISS) is an ATP binding site. An L-serine-binding site is contributed by Ser-389.

This sequence belongs to the class-II aminoacyl-tRNA synthetase family. Type-1 seryl-tRNA synthetase subfamily. As to quaternary structure, homodimer. The tRNA molecule binds across the dimer.

It is found in the cytoplasm. It carries out the reaction tRNA(Ser) + L-serine + ATP = L-seryl-tRNA(Ser) + AMP + diphosphate + H(+). It catalyses the reaction tRNA(Sec) + L-serine + ATP = L-seryl-tRNA(Sec) + AMP + diphosphate + H(+). It functions in the pathway aminoacyl-tRNA biosynthesis; selenocysteinyl-tRNA(Sec) biosynthesis; L-seryl-tRNA(Sec) from L-serine and tRNA(Sec): step 1/1. Catalyzes the attachment of serine to tRNA(Ser). Is also able to aminoacylate tRNA(Sec) with serine, to form the misacylated tRNA L-seryl-tRNA(Sec), which will be further converted into selenocysteinyl-tRNA(Sec). In Shewanella amazonensis (strain ATCC BAA-1098 / SB2B), this protein is Serine--tRNA ligase.